Consider the following 327-residue polypeptide: GMP reductase (327 aa).

Catalysis depends on Cys176, which acts as the Thioimidate intermediate. Residue 205–228 (IIADGGIRTHGDIAKSIRFGASMV) coordinates NADP(+).

Belongs to the IMPDH/GMPR family. GuaC type 2 subfamily.

The catalysed reaction is IMP + NH4(+) + NADP(+) = GMP + NADPH + 2 H(+). In terms of biological role, catalyzes the irreversible NADPH-dependent deamination of GMP to IMP. It functions in the conversion of nucleobase, nucleoside and nucleotide derivatives of G to A nucleotides, and in maintaining the intracellular balance of A and G nucleotides. The protein is GMP reductase of Streptococcus agalactiae serotype Ia (strain ATCC 27591 / A909 / CDC SS700).